The following is a 186-amino-acid chain: uncharacterized protein (186 aa).

This is an uncharacterized protein from Acanthamoeba polyphaga mimivirus (APMV).